The chain runs to 231 residues: Putative N-acetylmannosamine-6-phosphate 2-epimerase (231 aa).

It belongs to the NanE family.

It carries out the reaction an N-acyl-D-glucosamine 6-phosphate = an N-acyl-D-mannosamine 6-phosphate. It functions in the pathway amino-sugar metabolism; N-acetylneuraminate degradation; D-fructose 6-phosphate from N-acetylneuraminate: step 3/5. Its function is as follows. Converts N-acetylmannosamine-6-phosphate (ManNAc-6-P) to N-acetylglucosamine-6-phosphate (GlcNAc-6-P). The polypeptide is Putative N-acetylmannosamine-6-phosphate 2-epimerase (Glaesserella parasuis serovar 5 (strain SH0165) (Haemophilus parasuis)).